A 452-amino-acid chain; its full sequence is Argininosuccinate lyase (452 aa).

The segment at 431–452 is disordered; that stretch reads AFRKDSTGSTSPKWSFRAMRRA.

It belongs to the lyase 1 family. Argininosuccinate lyase subfamily.

It localises to the cytoplasm. The enzyme catalyses 2-(N(omega)-L-arginino)succinate = fumarate + L-arginine. It participates in amino-acid biosynthesis; L-arginine biosynthesis; L-arginine from L-ornithine and carbamoyl phosphate: step 3/3. This Tremblaya princeps protein is Argininosuccinate lyase.